The following is a 342-amino-acid chain: Putative gluconeogenesis factor (342 aa).

Positions 318–342 are disordered; sequence SEPPVAATQEIPIDGGRPRGDDAWR. Thr325 carries the post-translational modification Phosphothreonine. Residues 333–342 show a composition bias toward basic and acidic residues; sequence GRPRGDDAWR.

This sequence belongs to the gluconeogenesis factor family. Phosphorylated by PknA and/or PknB.

The protein localises to the cytoplasm. Its function is as follows. Required for morphogenesis under gluconeogenic growth conditions. The sequence is that of Putative gluconeogenesis factor from Mycobacterium tuberculosis (strain CDC 1551 / Oshkosh).